The primary structure comprises 420 residues: UDP-N-acetylglucosamine 1-carboxyvinyltransferase (420 aa).

22–23 (KN) contributes to the phosphoenolpyruvate binding site. Residue R91 coordinates UDP-N-acetyl-alpha-D-glucosamine. C115 (proton donor) is an active-site residue. Position 115 is a 2-(S-cysteinyl)pyruvic acid O-phosphothioketal (C115). Residues 120–124 (RPVDL), 160–163 (KVSV), D305, and I327 contribute to the UDP-N-acetyl-alpha-D-glucosamine site.

The protein belongs to the EPSP synthase family. MurA subfamily.

Its subcellular location is the cytoplasm. It carries out the reaction phosphoenolpyruvate + UDP-N-acetyl-alpha-D-glucosamine = UDP-N-acetyl-3-O-(1-carboxyvinyl)-alpha-D-glucosamine + phosphate. Its pathway is cell wall biogenesis; peptidoglycan biosynthesis. Its function is as follows. Cell wall formation. Adds enolpyruvyl to UDP-N-acetylglucosamine. This Pectobacterium atrosepticum (strain SCRI 1043 / ATCC BAA-672) (Erwinia carotovora subsp. atroseptica) protein is UDP-N-acetylglucosamine 1-carboxyvinyltransferase.